The following is a 458-amino-acid chain: Probable beta-eliminating lyase (458 aa).

Position 257 is an N6-(pyridoxal phosphate)lysine (Lys257).

This sequence belongs to the beta-eliminating lyase family. Pyridoxal 5'-phosphate serves as cofactor.

This is Probable beta-eliminating lyase from Trichomonas vaginalis (strain ATCC PRA-98 / G3).